A 412-amino-acid chain; its full sequence is Alanyl-tRNA editing protein Aarsd1 (412 aa).

4 residues coordinate Zn(2+): histidine 108, histidine 112, cysteine 208, and histidine 212.

Belongs to the class-II aminoacyl-tRNA synthetase family. Alax-L subfamily. It depends on Zn(2+) as a cofactor.

Its subcellular location is the cytoplasm. In terms of biological role, functions in trans to edit the amino acid moiety from incorrectly charged tRNA(Ala). The sequence is that of Alanyl-tRNA editing protein Aarsd1 (aarsd1) from Danio rerio (Zebrafish).